The primary structure comprises 279 residues: Oxygen-dependent coproporphyrinogen-III oxidase (279 aa).

S102 contributes to the substrate binding site. 2 residues coordinate a divalent metal cation: H106 and H116. The Proton donor role is filled by H116. Substrate is bound at residue 118–120 (NTR). Residues H149 and H179 each coordinate a divalent metal cation. Residues 244–279 (YVEFNLLYDRGTKFGLMTDGNVEAILMSLPPEVKWA) form an important for dimerization region.

The protein belongs to the aerobic coproporphyrinogen-III oxidase family. In terms of assembly, homodimer. The cofactor is a divalent metal cation.

Its subcellular location is the cytoplasm. It carries out the reaction coproporphyrinogen III + O2 + 2 H(+) = protoporphyrinogen IX + 2 CO2 + 2 H2O. It participates in porphyrin-containing compound metabolism; protoporphyrin-IX biosynthesis; protoporphyrinogen-IX from coproporphyrinogen-III (O2 route): step 1/1. Functionally, involved in the heme biosynthesis. Catalyzes the aerobic oxidative decarboxylation of propionate groups of rings A and B of coproporphyrinogen-III to yield the vinyl groups in protoporphyrinogen-IX. This Rickettsia bellii (strain RML369-C) protein is Oxygen-dependent coproporphyrinogen-III oxidase.